The chain runs to 193 residues: Large ribosomal subunit protein uL5 (193 aa).

Belongs to the universal ribosomal protein uL5 family. In terms of assembly, part of the 50S ribosomal subunit; part of the 5S rRNA/L5/L18/L25 subcomplex. Contacts the 5S rRNA and the P site tRNA. Forms a bridge to the 30S subunit in the 70S ribosome.

This is one of the proteins that bind and probably mediate the attachment of the 5S RNA into the large ribosomal subunit, where it forms part of the central protuberance. In the 70S ribosome it contacts protein S13 of the 30S subunit (bridge B1b), connecting the 2 subunits; this bridge is implicated in subunit movement. Contacts the P site tRNA; the 5S rRNA and some of its associated proteins might help stabilize positioning of ribosome-bound tRNAs. In Pseudarthrobacter chlorophenolicus (strain ATCC 700700 / DSM 12829 / CIP 107037 / JCM 12360 / KCTC 9906 / NCIMB 13794 / A6) (Arthrobacter chlorophenolicus), this protein is Large ribosomal subunit protein uL5.